We begin with the raw amino-acid sequence, 288 residues long: Proteasome assembly chaperone 1 (288 aa).

An N-acetylalanine modification is found at alanine 2. Residues 12–38 (TPCRAGTEEEEEEEDGNRETPEDREVR) are disordered. Residue threonine 18 is modified to Phosphothreonine. Positions 28 to 38 (NRETPEDREVR) are enriched in basic and acidic residues. Threonine 54 is subject to Phosphothreonine. A Phosphoserine modification is found at serine 180. Lysine 264 bears the N6-acetyllysine mark.

This sequence belongs to the PSMG1 family. In terms of assembly, forms a heterodimer with PSMG2. The PSMG1-PSMG2 heterodimer interacts directly with the PSMA5 and PSMA7 proteasome alpha subunits. Post-translationally, degraded by the proteasome upon completion of 20S proteasome maturation.

The protein resides in the cytoplasm. The protein localises to the endoplasmic reticulum. In terms of biological role, chaperone protein which promotes assembly of the 20S proteasome as part of a heterodimer with PSMG2. The PSMG1-PSMG2 heterodimer binds to the PSMA5 and PSMA7 proteasome subunits, promotes assembly of the proteasome alpha subunits into the heteroheptameric alpha ring and prevents alpha ring dimerization. The chain is Proteasome assembly chaperone 1 from Bos taurus (Bovine).